A 200-amino-acid chain; its full sequence is Glutathione S-transferase 1-1 (200 aa).

Residues glycine 1 to aspartate 73 form the GST N-terminal domain. Residues serine 2, histidine 43–isoleucine 45, and glutamate 57–arginine 59 each bind glutathione. The region spanning cysteine 79 to phenylalanine 200 is the GST C-terminal domain.

It belongs to the GST superfamily. Theta family. As to quaternary structure, homodimer.

It carries out the reaction RX + glutathione = an S-substituted glutathione + a halide anion + H(+). It catalyses the reaction 1,1,1-trichloro-2,2-bis(4-chlorophenyl)ethane = 1,1-dichloro-2,2-bis(4-chlorophenyl)ethylene + chloride + H(+). Conjugation of reduced glutathione to a wide number of exogenous and endogenous hydrophobic electrophiles. Has DDT dehydrochlorinase activity. The sequence is that of Glutathione S-transferase 1-1 (GstD1) from Drosophila teissieri (Fruit fly).